A 525-amino-acid chain; its full sequence is Packaging protein UL32 homolog (525 aa).

The span at 1-12 (MAHKVTSANEPN) shows a compositional bias: polar residues. Residues 1–20 (MAHKVTSANEPNPLTGKRLS) are disordered. Zn(2+)-binding residues include Cys95, Cys98, His173, Cys179, Cys255, Cys256, Cys357, Cys360, His427, Cys434, Cys473, and His510. 3 zinc finger regions span residues 95–179 (CRVC…ICRC), 255–510 (CCHL…LRIH), and 357–434 (CPLC…DPLC).

The protein belongs to the herpesviridae UL32 protein family.

Its subcellular location is the host cytoplasm. The protein resides in the host nucleus. In terms of biological role, plays a role in efficient localization of neo-synthesized capsids to nuclear replication compartments, thereby controlling cleavage and packaging of virus genomic DNA. The chain is Packaging protein UL32 homolog from Epstein-Barr virus (strain B95-8) (HHV-4).